Reading from the N-terminus, the 344-residue chain is MLYPLLRPLLFKFDAETAHEHTLKMLDRAHRLHLTPLAASPAARQPVQAMGLTFPNPVGLAAGLDKNGAHIDALAALGFGFIEIGTVTPRPQDGNPKPRLFRLPEHEAIINRMGFNNHGVAALLDNVRRSKFKGVLGINIGKNAITPIENAVDDYLACLDQVYAAASYVTVNISSPNTKNLRQLQQGDELGRLLAALKQRQLALADQHGRYVPLAVKIAPDLDDEQIAEIARLLTGNGIDGVIATNTTLSRREVAGHPLESEAGGLSGAPVRARSTEVIRKLHKELGGAMPIIGVGGILSGNDAVEKLDAGASLVQLYSGLIYRGPELVGECARATAQYLQARN.

FMN contacts are provided by residues 62-66 (AGLDK) and T86. A substrate-binding site is contributed by K66. 111–115 (NRMGF) serves as a coordination point for substrate. FMN is bound by residues N139 and N172. N172 contacts substrate. The Nucleophile role is filled by S175. N177 contributes to the substrate binding site. FMN is bound by residues K217 and T245. Position 246–247 (246–247 (NT)) interacts with substrate. FMN contacts are provided by residues G268, G297, and 318–319 (YS).

It belongs to the dihydroorotate dehydrogenase family. Type 2 subfamily. In terms of assembly, monomer. It depends on FMN as a cofactor.

The protein resides in the cell membrane. The enzyme catalyses (S)-dihydroorotate + a quinone = orotate + a quinol. It participates in pyrimidine metabolism; UMP biosynthesis via de novo pathway; orotate from (S)-dihydroorotate (quinone route): step 1/1. In terms of biological role, catalyzes the conversion of dihydroorotate to orotate with quinone as electron acceptor. The protein is Dihydroorotate dehydrogenase (quinone) of Chromobacterium violaceum (strain ATCC 12472 / DSM 30191 / JCM 1249 / CCUG 213 / NBRC 12614 / NCIMB 9131 / NCTC 9757 / MK).